Reading from the N-terminus, the 608-residue chain is Elongation factor 4 (608 aa).

The tr-type G domain maps to 11–193; the sequence is SKIRNFSIIA…QIVEKVPAPD (183 aa). GTP is bound by residues 23–28 and 140–143; these read DHGKST and NKID.

Belongs to the TRAFAC class translation factor GTPase superfamily. Classic translation factor GTPase family. LepA subfamily.

It is found in the cell membrane. The catalysed reaction is GTP + H2O = GDP + phosphate + H(+). Functionally, required for accurate and efficient protein synthesis under certain stress conditions. May act as a fidelity factor of the translation reaction, by catalyzing a one-codon backward translocation of tRNAs on improperly translocated ribosomes. Back-translocation proceeds from a post-translocation (POST) complex to a pre-translocation (PRE) complex, thus giving elongation factor G a second chance to translocate the tRNAs correctly. Binds to ribosomes in a GTP-dependent manner. The protein is Elongation factor 4 of Bacillus cytotoxicus (strain DSM 22905 / CIP 110041 / 391-98 / NVH 391-98).